Consider the following 139-residue polypeptide: Gastrula zinc finger protein XlCGF29.1 (139 aa).

5 C2H2-type zinc fingers span residues 6–28 (FTCT…LLIH), 34–56 (FDST…LSTH), 62–84 (FVCT…LHSH), 90–112 (FPCS…LRHH), and 117–139 (FPCT…QMIH).

It belongs to the krueppel C2H2-type zinc-finger protein family.

It localises to the nucleus. May be involved in transcriptional regulation. The protein is Gastrula zinc finger protein XlCGF29.1 of Xenopus laevis (African clawed frog).